A 159-amino-acid polypeptide reads, in one-letter code: MPLYAVIRIRGTVDVPPDIDKTLYLLRLRRRYTASIYHDSLPGLRDMLRTVEAWTTYGEIEERVLEELLRKRGRIVGDKPLTDKWVEENLGLSGLGELAEKLVSGELHYHRLEEKGVKPFFRLHPPRGGFKKSIKRMFRDGGELGYRGSAINELILKML.

Belongs to the universal ribosomal protein uL30 family. As to quaternary structure, part of the 50S ribosomal subunit.

The sequence is that of Large ribosomal subunit protein uL30 from Aeropyrum pernix (strain ATCC 700893 / DSM 11879 / JCM 9820 / NBRC 100138 / K1).